The chain runs to 417 residues: Snake venom metalloproteinase acutolysin-C (417 aa).

A signal peptide spans 1 to 20 (MIQVLLVTICLAALPYQGSS). The propeptide at 21–189 (IMLESGKVND…KRPSRLNLTP (169 aa)) is activation peptide. Positions 197 to 392 (TSVNLQLIVD…KKPKCIHKKS (196 aa)) constitute a Peptidase M12B domain. Disulfide bonds link Cys-308–Cys-387, Cys-349–Cys-371, and Cys-351–Cys-354. Residue His-333 coordinates Zn(2+). The active site involves Glu-334. Residues His-337 and His-343 each contribute to the Zn(2+) site. Residues 393 to 417 (LKTDTVSTSVSGNEPLDDNVDGFHA) constitute a propeptide that is removed on maturation. A disordered region spans residues 398-417 (VSTSVSGNEPLDDNVDGFHA). Over residues 407–417 (PLDDNVDGFHA) the composition is skewed to acidic residues.

It belongs to the venom metalloproteinase (M12B) family. P-I subfamily. As to quaternary structure, monomer. Requires Zn(2+) as cofactor. Expressed by the venom gland.

The protein resides in the secreted. Functionally, this protein is an alkaline zinc metalloprotease from snake venom that possesses weak hemorrhagic activity. This is Snake venom metalloproteinase acutolysin-C from Deinagkistrodon acutus (Hundred-pace snake).